Here is a 1304-residue protein sequence, read N- to C-terminus: MAKIAKTHEDIEAQIREIQGKKAALDEAQGVGLDSTGYYDQEIYGGSDSRFAGYVTSIAATELEDDDDDYSSSTSLLGQKKPGYHAPVALLNDIPQSTEQYDPFAEHRPPKIADREDEYKKHRRTMIISPERLDPFADGGKTPDPKMNARTYMDVMREQHLTKEEREIRQQLAEKAKAGELKVVNGAAASQPPSKRKRRWDQTADQTPGATPKKLSSWDQAETPGHTPSLRWDETPGRAKGSETPGATPGSKIWDPTPSHTPAGAATPGRGDTPGHATPGHGGATSSARKNRWDETPKTERDTPGHGSGWAETPRTDRGGDSIGETPTPGASKRKSRWDETPASQMGGSTPVLTPGKTPIGTPAMNMATPTPGHIMSMTPEQLQAWRWEREIDERNRPLSDEELDAMFPEGYKVLPPPAGYVPIRTPARKLTATPTPLGGMTGFHMQTEDRTMKSVNDQPSGNLPFLKPDDIQYFDKLLVDVDESTLSPEEQKERKIMKLLLKIKNGTPPMRKAALRQITDKAREFGAGPLFNQILPLLMSPTLEDQERHLLVKVIDRILYKLDDLVRPYVHKILVVIEPLLIDEDYYARVEGREIISNLAKAAGLATMISTMRPDIDNMDEYVRNTTARAFAVVASALGIPSLLPFLKAVCKSKKSWQARHTGIKIVQQIAILMGCAILPHLRSLVEIIEHGLVDEQQKVRTISALAIAALAEAATPYGIESFDSVLKPLWKGIRQHRGKGLAAFLKAIGYLIPLMDAEYANYYTREVMLILIREFQSPDEEMKKIVLKVVKQCCGTDGVEANYIKTEILPPFFKHFWQHRMALDRRNYRQLVDTTVELANKVGAAEIISRIVDDLKDEAEQYRKMVMETIEKIMGNLGAADIDHKLEEQLIDGILYAFQEQTTEDSVMLNGFGTVVNALGKRVKPYLPQICGTVLWRLNNKSAKVRQQAADLISRTAVVMKTCQEEKLMGHLGVVLYEYLGEEYPEVLGSILGALKAIVNVIGMHKMTPPIKDLLPRLTPILKNRHEKVQENCIDLVGRIADRGAEYVSAREWMRICFELLELLKAHKKAIRRATVNTFGYIAKAIGPHDVLATLLNNLKVQERQNRVCTTVAIAIVAETCSPFTVLPALMNEYRVPELNVQNGVLKSLSFLFEYIGEMGKDYIYAVTPLLEDALMDRDLVHRQTASAVVQHMSLGVYGFGCEDSLNHLLNYVWPNVFETSPHVIQAVMGALEGLRVAIGPCRMLQYCLQGLFHPARKVRDVYWKIYNSIYIGSQDALIAHYPRIYNDDKNTYIRYDLDYIL.

2 disordered regions span residues 100–119 (QYDP…EDEY) and 124–148 (RTMI…PKMN). Positions 104-119 (FAEHRPPKIADREDEY) are enriched in basic and acidic residues. At T125 the chain carries Phosphothreonine. Residue S129 is modified to Phosphoserine. The residue at position 141 (K141) is an N6-acetyllysine. Phosphothreonine is present on T142. R157 carries the citrulline modification. The interval 172-360 (LAEKAKAGEL…PVLTPGKTPI (189 aa)) is disordered. S194 bears the Phosphoserine mark. Residues T203, T207, and T211 each carry the phosphothreonine modification. K214 bears the N6-acetyllysine; alternate mark. K214 participates in a covalent cross-link: Glycyl lysine isopeptide (Lys-Gly) (interchain with G-Cter in SUMO2); alternate. Phosphothreonine is present on residues T223 and T227. Residues 223–491 (TPGHTPSLRW…VDESTLSPEE (269 aa)) form an interaction with PPP1R8 region. S229 is subject to Phosphoserine. Residues 231–241 (RWDETPGRAKG) are compositionally biased toward basic and acidic residues. 8 positions are modified to phosphothreonine: T235, T244, T248, T257, T261, T267, T273, and T278. Phosphoserine is present on S287. A compositionally biased stretch (basic and acidic residues) spans 291–304 (NRWDETPKTERDTP). T296, T299, T303, and T313 each carry phosphothreonine. The residue at position 322 (S322) is a Phosphoserine. 2 positions are modified to phosphothreonine: T326 and T328. Phosphoserine is present on S332. Position 341 is a phosphothreonine (T341). Polar residues predominate over residues 342-352 (PASQMGGSTPV). Residues S344 and S349 each carry the phosphoserine modification. A phosphothreonine mark is found at T350 and T354. Position 400 is a phosphoserine (S400). Residue K413 forms a Glycyl lysine isopeptide (Lys-Gly) (interchain with G-Cter in SUMO2); alternate linkage. K413 participates in a covalent cross-link: Glycyl lysine isopeptide (Lys-Gly) (interchain with G-Cter in SUMO1); alternate. Position 426 is a phosphothreonine (T426). A Glycyl lysine isopeptide (Lys-Gly) (interchain with G-Cter in SUMO2) cross-link involves residue K430. T434 is modified (phosphothreonine; by DYRK1A). A Phosphothreonine modification is found at T436. S488 is subject to Phosphoserine. HEAT repeat units follow at residues 529–568 (GPLF…DLVR), 569–603 (PYVH…LAKA), 604–641 (AGLA…ALGI), 643–677 (SLLP…LMGC), 680–718 (LPHL…AATP), 763–801 (NYYT…TDGV), 843–881 (KVGA…NLGA), 1010–1048 (TPPI…RGAE), 1052–1090 (AREW…AIGP), 1122–1160 (TCSP…YIGE), and 1163–1201 (KDYI…GVYG). An interaction with PHF5A region spans residues 547–550 (QERH). An N6-acetyllysine mark is found at K554 and K562. An interaction with PHF5A region spans residues 1156–1157 (EY). The interaction with SF3B3 and SF3B5 stretch occupies residues 1248-1304 (QYCLQGLFHPARKVRDVYWKIYNSIYIGSQDALIAHYPRIYNDDKNTYIRYDLDYIL).

It belongs to the SF3B1 family. In terms of assembly, component of the 17S U2 SnRNP complex, a ribonucleoprotein complex that contains small nuclear RNA (snRNA) U2 and a number of specific proteins. Part of the SF3B subcomplex of the 17S U2 SnRNP complex. SF3B associates with the splicing subcomplex SF3A and a 12S RNA unit to form the U2 small nuclear ribonucleoproteins complex (U2 snRNP). Within the SF3B complex, interacts directly (via HEAT domain) with SF3B3, SF3B5, SF3B6 and (via HEAT domain) with PHF5A. The SF3B subcomplex interacts with U2AF2. Identified in the spliceosome C complex. Component of the minor (U12-type spliceosome) spliceosome. Within the minor spliceosome complex, interacts with SCNM1 and CRIPT. Component of the B-WICH complex, at least composed of SMARCA5/SNF2H, BAZ1B/WSTF, SF3B1, DEK, MYO1C, ERCC6, MYBBP1A and DDX21. Phosphorylated form interacts with PPP1R8. Interacts with PQBP1. Interacts with RBM17. Interacts with RBM39. Interacts with SETX. Interacts with RBM15. Interacts with USH1G. Interacts with SDE2. Interacts with U2AF1. Interacts with CACTIN. Interacts with ZRSR1. Interacts with CYREN. In terms of processing, phosphorylated. Phosphorylation occurs concomitantly with the splicing catalytic steps. Phosphorylation on Thr-244, Thr-248 and Thr-313 by cyclin-dependent kinases promotes interaction with PPP1R8 during mitosis. Post-translationally, citrullinated by PADI4. In terms of tissue distribution, ubiquitous.

It is found in the nucleus. The protein resides in the nucleus speckle. In terms of biological role, component of the 17S U2 SnRNP complex of the spliceosome, a large ribonucleoprotein complex that removes introns from transcribed pre-mRNAs. The 17S U2 SnRNP complex (1) directly participates in early spliceosome assembly and (2) mediates recognition of the intron branch site during pre-mRNA splicing by promoting the selection of the pre-mRNA branch-site adenosine, the nucleophile for the first step of splicing. Within the 17S U2 SnRNP complex, SF3B1 is part of the SF3B subcomplex, which is required for 'A' complex assembly formed by the stable binding of U2 snRNP to the branchpoint sequence in pre-mRNA. Sequence independent binding of SF3A and SF3B subcomplexes upstream of the branch site is essential, it may anchor U2 snRNP to the pre-mRNA. May also be involved in the assembly of the 'E' complex. Also acts as a component of the minor spliceosome, which is involved in the splicing of U12-type introns in pre-mRNAs. Together with other U2 snRNP complex components may also play a role in the selective processing of microRNAs (miRNAs) from the long primary miRNA transcript, pri-miR-17-92. The polypeptide is Splicing factor 3B subunit 1 (Mus musculus (Mouse)).